The primary structure comprises 154 residues: Superoxide dismutase [Cu-Zn] 1 (154 aa).

Positions 47, 49, and 64 each coordinate Cu cation. Cysteine 58 and cysteine 147 are oxidised to a cystine. Zn(2+)-binding residues include histidine 64, histidine 72, histidine 81, and aspartate 84. Histidine 121 serves as a coordination point for Cu cation. Residue arginine 144 coordinates substrate.

It belongs to the Cu-Zn superoxide dismutase family. As to quaternary structure, homodimer. The cofactor is Cu cation. Zn(2+) serves as cofactor.

It localises to the cytoplasm. The enzyme catalyses 2 superoxide + 2 H(+) = H2O2 + O2. Its function is as follows. Destroys radicals which are normally produced within the cells and which are toxic to biological systems. The polypeptide is Superoxide dismutase [Cu-Zn] 1 (SOD1) (Debaryomyces hansenii (strain ATCC 36239 / CBS 767 / BCRC 21394 / JCM 1990 / NBRC 0083 / IGC 2968) (Yeast)).